A 243-amino-acid polypeptide reads, in one-letter code: Pyridoxine 5'-phosphate synthase (243 aa).

Asn-7 contributes to the 3-amino-2-oxopropyl phosphate binding site. Residue 9-10 (DH) coordinates 1-deoxy-D-xylulose 5-phosphate. Arg-18 provides a ligand contact to 3-amino-2-oxopropyl phosphate. Catalysis depends on His-43, which acts as the Proton acceptor. 1-deoxy-D-xylulose 5-phosphate-binding residues include Arg-45 and His-50. Residue Glu-70 is the Proton acceptor of the active site. Thr-100 contacts 1-deoxy-D-xylulose 5-phosphate. Catalysis depends on His-190, which acts as the Proton donor. 3-amino-2-oxopropyl phosphate is bound by residues Gly-191 and 212–213 (GH).

This sequence belongs to the PNP synthase family. Homooctamer; tetramer of dimers.

Its subcellular location is the cytoplasm. The enzyme catalyses 3-amino-2-oxopropyl phosphate + 1-deoxy-D-xylulose 5-phosphate = pyridoxine 5'-phosphate + phosphate + 2 H2O + H(+). It functions in the pathway cofactor biosynthesis; pyridoxine 5'-phosphate biosynthesis; pyridoxine 5'-phosphate from D-erythrose 4-phosphate: step 5/5. Catalyzes the complicated ring closure reaction between the two acyclic compounds 1-deoxy-D-xylulose-5-phosphate (DXP) and 3-amino-2-oxopropyl phosphate (1-amino-acetone-3-phosphate or AAP) to form pyridoxine 5'-phosphate (PNP) and inorganic phosphate. This is Pyridoxine 5'-phosphate synthase from Prochlorococcus marinus (strain MIT 9211).